The primary structure comprises 287 residues: ATP synthase gamma chain (287 aa).

This sequence belongs to the ATPase gamma chain family. F-type ATPases have 2 components, CF(1) - the catalytic core - and CF(0) - the membrane proton channel. CF(1) has five subunits: alpha(3), beta(3), gamma(1), delta(1), epsilon(1). CF(0) has three main subunits: a, b and c.

It localises to the cell inner membrane. Its function is as follows. Produces ATP from ADP in the presence of a proton gradient across the membrane. The gamma chain is believed to be important in regulating ATPase activity and the flow of protons through the CF(0) complex. This Xylella fastidiosa (strain M23) protein is ATP synthase gamma chain.